Here is a 399-residue protein sequence, read N- to C-terminus: Zona occludens toxin (399 aa).

In terms of biological role, increases the permeability of the small intestine mucosa by affecting the structure of intercellular tight junctions (zonula occludens). In Vibrio cholerae serotype O1 (strain ATCC 39315 / El Tor Inaba N16961), this protein is Zona occludens toxin (zot).